The chain runs to 137 residues: Small ribosomal subunit protein uS9c (137 aa).

A disordered region spans residues 106–137; that stretch reads KSEGYLTRDPRVKERKKYGLKKARKAPQFSKR. A compositionally biased stretch (basic residues) spans 118–137; sequence KERKKYGLKKARKAPQFSKR.

Belongs to the universal ribosomal protein uS9 family.

The protein localises to the plastid. It is found in the chloroplast. This Pyropia yezoensis (Susabi-nori) protein is Small ribosomal subunit protein uS9c (rps9).